Here is a 648-residue protein sequence, read N- to C-terminus: MINITFPDGAVREFESGITTFDIAQSISNSLAKKALAGKFNGQLIDTNRPIDTDGSIEIVTPDHEDAFGVLRHSAAHLFAQAAKRLFPDIHLGVGPAIAEGFYYDTDNSSGQISNEDLPRIEAEMQKIVKENYPCIREEVTKEEALEIFKDDPYKIELINEHSDDAAGLTIYRQGEFVDLCRGPHVPSTGRIQVFHLLNVAGAYWRGNSDNAMMQRVYGTAWFDKKDLKAYLTRLEEAKERDHRKLGKELDLFMISQEVGQGLPFWLPDGATIRRTLERYITDKELASGYQHVYTPPLASVELYKTSGHWEHYQEDMFPTMDMGDGEEFVLRPMNCPHHIQVYKNHVHSYRELPIRIAELGMMHRYEKSGALSGLQRVREMTLNDGHLFVTPEQIQEEFQRALQLIIDVYEDFNLTDYRFRLSYRDPKDTEKYYDNDEMWENAQSMLKAALDEMGVEYFEAEGEAAFYGPKLDIQVKTALGNEETLSTIQLDFLLPERFDLKYIGADGEEHRPVMIHRGVISTMERFTAILIETYKGAFPTWLAPHQVTVIPISNEAHIDYAWEVAKALRDRGIRADVDDRNEKMQYKIRASQTSKIPYQLIVGDKEMEDKSVNVRRYGSKATHTESLSEFMDTILADIARKSRPVED.

One can recognise a TGS domain in the interval 1–61 (MINITFPDGA…DTDGSIEIVT (61 aa)). The tract at residues 242 to 540 (DHRKLGKELD…LIETYKGAFP (299 aa)) is catalytic. 3 residues coordinate Zn(2+): C336, H387, and H517.

The protein belongs to the class-II aminoacyl-tRNA synthetase family. In terms of assembly, homodimer. The cofactor is Zn(2+).

The protein localises to the cytoplasm. It carries out the reaction tRNA(Thr) + L-threonine + ATP = L-threonyl-tRNA(Thr) + AMP + diphosphate + H(+). Catalyzes the attachment of threonine to tRNA(Thr) in a two-step reaction: L-threonine is first activated by ATP to form Thr-AMP and then transferred to the acceptor end of tRNA(Thr). Also edits incorrectly charged L-seryl-tRNA(Thr). In Streptococcus uberis (strain ATCC BAA-854 / 0140J), this protein is Threonine--tRNA ligase.